The primary structure comprises 302 residues: Ornithine carbamoyltransferase (302 aa).

Residues Ser52–Thr55, Gln79, Arg103, and His130–Gln133 each bind carbamoyl phosphate. L-ornithine contacts are provided by residues Asn161, Asp221, and Ser225–Met226. Carbamoyl phosphate is bound by residues Cys261–Leu262 and Arg289.

It belongs to the aspartate/ornithine carbamoyltransferase superfamily. OTCase family.

The protein resides in the cytoplasm. The enzyme catalyses carbamoyl phosphate + L-ornithine = L-citrulline + phosphate + H(+). Its pathway is amino-acid biosynthesis; L-arginine biosynthesis; L-arginine from L-ornithine and carbamoyl phosphate: step 1/3. In terms of biological role, reversibly catalyzes the transfer of the carbamoyl group from carbamoyl phosphate (CP) to the N(epsilon) atom of ornithine (ORN) to produce L-citrulline. The polypeptide is Ornithine carbamoyltransferase (Syntrophotalea carbinolica (strain DSM 2380 / NBRC 103641 / GraBd1) (Pelobacter carbinolicus)).